The following is a 1401-amino-acid chain: MEVLMAERANLVFHNKVIDGTAMKRLISRLINHFGMAYTSHILDQVKTLGFQQATATSISLGIDDLLTIPSKGWLVQDAEQQSLILEKHHHYGNVHAVEKLRQSIEIWYATSEYLRQEMNPNFRMTDPLNPVHIMSFSGARGNASQVHQLVGMRGLMSDPQGQMIDLPIQSNLREGLSLTEYIISCYGARKGVVDTAVRTSDAGYLTRRLVEVVQHIVVRRADCGTVRGVSVSPQNGMMPERILIQTLIGRVLADDIYIGPRCIATRNQNIGVGLVNRFITFRAQPISIRTPFTCRSTSWICRLCYGRSPTHGDLVELGEAVGIIAGQSIGEPGTQLTLRTFHTGGVFTGGTAEHVRAPSNGKIRFHEDLVHPTRTRHGHPAFLCSIDLYVTIESEDILHNVNIPPKSFLLVQNDQYVESEQVIAEIRAGTSTLNLKEKVRKHIYSDSDGEMHWSTDVYHAPEFTYGNVHLLSKTSHLWILLGEPCRSSLVSLSIHRDQDQKSAHSLFVKRRSISNLSETNDRARQKIFSAHFSGQKEDRIADYSDLNRIICTDHSNLVYPAILPILAENSDFLSNLLSKRRRNQFIIPLQSIQERKKELMPCSGISMKIPTNGIFCGNSIIAYFDDPRYRRMSSGSTKYGTLEMHSIVKKEDLIQYRGVREFRPKHQKKVDRFFFIPEEVHILPGSSSISIMVRNNSIIGVDTQITLNIRSRVGGLVRVEKKKKRIELKIFSGDIYFPGRADKISRHSGVLIPPGTRKTNEKESKKVKNWIYVQRITPSKKKFFVLVRPVVTYEIMDGITLATLFPPDLLQERDNVQLRVVNYILYGNGKPIRGISDTSIQLVRTCLVLNWNQDKKSSSSEAARASVVELRTNDLIRHFLRIDFVKSPISYIGKRNDPWGLGLLADNGLDWTNINPYSKARIQQTLNQNQGTIHTFLNRNKGCQSLSILSSSNCSRMDPVNGAKYHNVIQESIQEDPLIPIRNSLGPLGTSLPIANFYSFDRLLTHNQILVTNYLQLDNLKQPFQVLKLKYYLIAENGKIYNPNPRSKILLNPLNLNWYFLHHNYCAETSKIMSLGQFICENVFIAKKRPPLKSGQVILVQVDSVVIRSAKPYLATPGATVRGLYGETFYEGDTLVTFHYEKSRSGDITQGLPKVEQVLEVRSVDSISMNLERRVEGWNKCLTRILGIPWGFLIGAELTIAQSRISLVNKIQKVYRSQGVQIHNRHIEIIVRQITSNVLVSEDGMSNVFSPGELIRLLRAKRMGRALEEAICYRALLLGITKASLNTQSFISEASFQETARVLAKAALQGRIDWLKGLKENVVLGGVIPAGTGFRGLVHPSKQYNNLSLETTKKNLFEGGVRDILSHHRKLLDSSLSKKFHNTSHNTIHQTIIYRIYNDS.

Zn(2+) is bound by residues C224, C295, C302, and C305.

It belongs to the RNA polymerase beta' chain family. RpoC2 subfamily. In terms of assembly, in plastids the minimal PEP RNA polymerase catalytic core is composed of four subunits: alpha, beta, beta', and beta''. When a (nuclear-encoded) sigma factor is associated with the core the holoenzyme is formed, which can initiate transcription. The cofactor is Zn(2+).

The protein localises to the plastid. It is found in the chloroplast. It carries out the reaction RNA(n) + a ribonucleoside 5'-triphosphate = RNA(n+1) + diphosphate. DNA-dependent RNA polymerase catalyzes the transcription of DNA into RNA using the four ribonucleoside triphosphates as substrates. The chain is DNA-directed RNA polymerase subunit beta'' from Ipomoea purpurea (Common morning glory).